An 84-amino-acid chain; its full sequence is Large ribosomal subunit protein bL27 (84 aa).

Residues 1-22 (MAHKKAGGSTRNGRDSESKRLG) form a disordered region.

This sequence belongs to the bacterial ribosomal protein bL27 family.

The polypeptide is Large ribosomal subunit protein bL27 (Shewanella amazonensis (strain ATCC BAA-1098 / SB2B)).